A 228-amino-acid chain; its full sequence is Glyceraldehyde 3-phosphate phosphatase (228 aa).

The protein belongs to the HAD-like hydrolase superfamily. Mg(2+) serves as cofactor.

Its function is as follows. Catalyzes the dephosphorylation of D,L-glyceraldehyde 3-phosphate in vitro. This Methanocaldococcus jannaschii (strain ATCC 43067 / DSM 2661 / JAL-1 / JCM 10045 / NBRC 100440) (Methanococcus jannaschii) protein is Glyceraldehyde 3-phosphate phosphatase.